We begin with the raw amino-acid sequence, 288 residues long: Polyamine aminopropyltransferase (288 aa).

In terms of domain architecture, PABS spans 9-238 (ETLHDQFGQY…GIMTFAWATD (230 aa)). Glutamine 33 lines the S-methyl-5'-thioadenosine pocket. Histidine 64 and aspartate 88 together coordinate spermidine. S-methyl-5'-thioadenosine is bound by residues glutamate 108 and 140–141 (DG). The Proton acceptor role is filled by aspartate 158. Position 158-161 (158-161 (DCTD)) interacts with spermidine. An S-methyl-5'-thioadenosine-binding site is contributed by proline 165.

This sequence belongs to the spermidine/spermine synthase family. Homodimer or homotetramer.

The protein localises to the cytoplasm. It carries out the reaction S-adenosyl 3-(methylsulfanyl)propylamine + putrescine = S-methyl-5'-thioadenosine + spermidine + H(+). Its pathway is amine and polyamine biosynthesis; spermidine biosynthesis; spermidine from putrescine: step 1/1. Its function is as follows. Catalyzes the irreversible transfer of a propylamine group from the amino donor S-adenosylmethioninamine (decarboxy-AdoMet) to putrescine (1,4-diaminobutane) to yield spermidine. The protein is Polyamine aminopropyltransferase of Shigella boydii serotype 4 (strain Sb227).